We begin with the raw amino-acid sequence, 211 residues long: Thymidylate kinase (211 aa).

Residue Gly-12–Ser-19 participates in ATP binding.

Belongs to the thymidylate kinase family.

The catalysed reaction is dTMP + ATP = dTDP + ADP. In terms of biological role, phosphorylation of dTMP to form dTDP in both de novo and salvage pathways of dTTP synthesis. The sequence is that of Thymidylate kinase from Ruegeria pomeroyi (strain ATCC 700808 / DSM 15171 / DSS-3) (Silicibacter pomeroyi).